The sequence spans 599 residues: Adenine deaminase (599 aa).

Belongs to the metallo-dependent hydrolases superfamily. Adenine deaminase family. The cofactor is Mn(2+).

The catalysed reaction is adenine + H2O + H(+) = hypoxanthine + NH4(+). The protein is Adenine deaminase of Clostridium botulinum (strain 657 / Type Ba4).